Here is a 197-residue protein sequence, read N- to C-terminus: TLE family member 5 (197 aa).

The interval 166–197 (LSALGSQAHLSKEDKNGHDGDTHQEDDGEKSD) is CCN domain. A disordered region spans residues 174 to 197 (HLSKEDKNGHDGDTHQEDDGEKSD). Over residues 175 to 197 (LSKEDKNGHDGDTHQEDDGEKSD) the composition is skewed to basic and acidic residues. At Ser196 the chain carries Phosphoserine.

This sequence belongs to the WD repeat Groucho/TLE family. Homooligomer and heterooligomer with other family members. Binds TCF7. Binds the NF-kappa-B subunit RELA. Interacts with PHF12. Interacts (via Q domain) with SIX3. Interacts with SIX6. In terms of processing, ubiquitinated by XIAP/BIRC4. As to expression, found predominantly in muscle, heart and Placenta. In fetal tissues, abundantly expressed in the heart, lung, kidney, brain and liver.

It localises to the nucleus. Its function is as follows. Transcriptional corepressor. Acts as a dominant repressor towards other family members. Inhibits NF-kappa-B-regulated gene expression. May be required for the initiation and maintenance of the differentiated state. Essential for the transcriptional repressor activity of SIX3 during retina and lens development. This chain is TLE family member 5, found in Homo sapiens (Human).